Here is a 161-residue protein sequence, read N- to C-terminus: Nucleotide-binding protein XOO0647 (161 aa).

It belongs to the YajQ family.

Functionally, nucleotide-binding protein. This is Nucleotide-binding protein XOO0647 from Xanthomonas oryzae pv. oryzae (strain MAFF 311018).